An 858-amino-acid chain; its full sequence is MSVVGLDVGSQSCYIAVARAGGIETIANEFSDRCTPSVISFGPKNRTIGVAAKNQQITHANNTVSSFKRFHGRAFNDPFIQKEKENLSYDLVPMKNGGVGIKVMYMDEDHLFSVEQITAMLLTKLKETAENNLKKPVTDCVISVPSFFTDAERRSVLDAAQIVGLNCLRLMNDMTAVALNYGIYKQDLPNADEKPRVVVFVDMGHSSFQVSACAFNKGKLKVLGTAFDPFLGGKNFDEKLVEHFCAEFKTKYKLDAKSKIRALLRLHQECEKLKKLMSSNSTDLPLNIECFMNDKDVSAKMNRSQFEELCAELLQKIEVPLHLLMEQTHLKTEEVSAIEIVGGATRIPAVKERIARFFGKDVSTTLNADEAVARGCALQCAILSPAFKVREFSVTDAVPFPISLVWNHDSEETEGVHEVFSRNHAAPFSKVLTFLRRGPFELEAFYSDPQAVPYPEAKIGRFVVQNVSAQKDGEKSKVKVKVRVNTHGIFTISTASMVEKVPTEEEDGSSVEADMECPNQKPAESSDVDKNIQQDNSEAGTQPQVQTDGQQTSQSPPSPELTSEENKIPDADKANEKKVDQPPEAKKPKIKVVNVELPVEANLVWQLGRDLLNMYIETEGKMIMQDKLEKERNDAKNAVEECVYEFRDKLCGPYEKFICEQEHEKFLRLLTETEDWLYEEGEDQAKQAYIDKLEELMKMGTPVKVRFQEAEERPRVLEELGQRLQHYAKIAADFRGKDEKYNHIDESEMKKVEKSVNEVMEWMNNVMNAQAKRSLHQDPVVRTHEISAKVKELNNVCEPVVTQPKPKIESPKLERTPNGPNMDKKEDLEGKSNLGADAPHQNGECHPNEKGSVSMDLD.

Residue S2 is modified to N-acetylserine. Residue K471 is modified to N6-acetyllysine. Disordered regions lie at residues 500–585 and 801–858; these read KVPT…PPEA and VTQP…MDLD. Positions 504–515 are enriched in acidic residues; sequence EEEDGSSVEADM. A phosphoserine mark is found at S509 and S510. Residues 533–555 are compositionally biased toward polar residues; it reads QQDNSEAGTQPQVQTDGQQTSQS. Position 558 is a phosphoserine (S558). T562 is subject to Phosphothreonine. Basic and acidic residues-rich tracts occupy residues 564–585 and 806–815; these read EENK…PPEA and PKIESPKLER. S810 carries the post-translational modification Phosphoserine. The residue at position 816 (T816) is a Phosphothreonine.

Belongs to the heat shock protein 70 family. As to quaternary structure, interacts with HSPA8/HSC70. Interacts with HSPA1A (via NBD) and HSPA1B (via NBD). In terms of processing, phosphorylation on Ser-509 may be important for regulation of the HSPA8/HSC70 chaperone activity.

Its subcellular location is the cytoplasm. Acts as a nucleotide-exchange factor (NEF) for chaperone proteins HSPA1A and HSPA1B, promoting the release of ADP from HSPA1A/B thereby triggering substrate release. Prevents the aggregation of denatured proteins in cells under severe stress, on which the ATP levels decrease markedly. Inhibits HSPA8/HSC70 ATPase and chaperone activities. The polypeptide is Heat shock protein 105 kDa (Hsph1) (Rattus norvegicus (Rat)).